The following is a 334-amino-acid chain: Ketol-acid reductoisomerase (NADP(+)) (334 aa).

Positions 2 to 181 (TKVYYDETVT…GATRAGVIET (180 aa)) constitute a KARI N-terminal Rossmann domain. NADP(+)-binding positions include 25–28 (YGSQ), R48, S52, and 82–85 (DEIQ). H107 is an active-site residue. Position 133 (G133) interacts with NADP(+). A KARI C-terminal knotted domain is found at 182-327 (TFKEETETDL…RELREMMPFI (146 aa)). 4 residues coordinate Mg(2+): D190, E194, E226, and E230. A substrate-binding site is contributed by S251.

It belongs to the ketol-acid reductoisomerase family. Mg(2+) is required as a cofactor.

It catalyses the reaction (2R)-2,3-dihydroxy-3-methylbutanoate + NADP(+) = (2S)-2-acetolactate + NADPH + H(+). The catalysed reaction is (2R,3R)-2,3-dihydroxy-3-methylpentanoate + NADP(+) = (S)-2-ethyl-2-hydroxy-3-oxobutanoate + NADPH + H(+). The protein operates within amino-acid biosynthesis; L-isoleucine biosynthesis; L-isoleucine from 2-oxobutanoate: step 2/4. It functions in the pathway amino-acid biosynthesis; L-valine biosynthesis; L-valine from pyruvate: step 2/4. Involved in the biosynthesis of branched-chain amino acids (BCAA). Catalyzes an alkyl-migration followed by a ketol-acid reduction of (S)-2-acetolactate (S2AL) to yield (R)-2,3-dihydroxy-isovalerate. In the isomerase reaction, S2AL is rearranged via a Mg-dependent methyl migration to produce 3-hydroxy-3-methyl-2-ketobutyrate (HMKB). In the reductase reaction, this 2-ketoacid undergoes a metal-dependent reduction by NADPH to yield (R)-2,3-dihydroxy-isovalerate. In Staphylococcus epidermidis (strain ATCC 35984 / DSM 28319 / BCRC 17069 / CCUG 31568 / BM 3577 / RP62A), this protein is Ketol-acid reductoisomerase (NADP(+)).